A 188-amino-acid chain; its full sequence is Heterodisulfide reductase subunit C-like protein (188 aa).

2 4Fe-4S ferredoxin-type domains span residues 34–64 and 78–109; these read KELG…FEWY and DELL…FEVM. Residues Cys44, Cys47, Cys50, Cys54, Cys89, Cys92, Cys95, and Cys99 each contribute to the [4Fe-4S] cluster site.

The protein belongs to the HdrC family. In terms of assembly, the heterodisulfide reductase is composed of three subunits; HdlA, HdlB and HdlC. It forms a complex with the F420-non-reducing hydrogenase (Mvh), which provides the reducing equivalents to the heterodisulfide reductase.

It localises to the cytoplasm. Its function is as follows. Has oxidoreductase activity. The Hdl and Mvh subunits may together mediate electron transfer from hydrogen to an unidentified electron acceptor on the cytoplasmic side of the membrane. This Archaeoglobus profundus (strain DSM 5631 / JCM 9629 / NBRC 100127 / Av18) protein is Heterodisulfide reductase subunit C-like protein (hdlC).